We begin with the raw amino-acid sequence, 243 residues long: Interleukin-27 subunit alpha (243 aa).

Positions 1 to 28 are cleaved as a signal peptide; that stretch reads MGQTAGDLGWRLSLLLLPLLLVQAGVWG.

It belongs to the IL-6 superfamily. In terms of assembly, heterodimer with EBI3; not disulfide-linked. This heterodimer is known as interleukin IL-27. Post-translationally, O-glycosylated. As to expression, expressed in monocytes and in placenta.

It is found in the secreted. In terms of biological role, associates with EBI3 to form the IL-27 interleukin, a heterodimeric cytokine which functions in innate immunity. IL-27 has pro- and anti-inflammatory properties, that can regulate T-helper cell development, suppress T-cell proliferation, stimulate cytotoxic T-cell activity, induce isotype switching in B-cells, and that has diverse effects on innate immune cells. Among its target cells are CD4 T-helper cells which can differentiate in type 1 effector cells (TH1), type 2 effector cells (TH2) and IL17 producing helper T-cells (TH17). It drives rapid clonal expansion of naive but not memory CD4 T-cells. It also strongly synergizes with IL-12 to trigger interferon-gamma/IFN-gamma production of naive CD4 T-cells, binds to the cytokine receptor WSX-1/TCCR which appears to be required but not sufficient for IL-27-mediated signal transduction. IL-27 potentiate the early phase of TH1 response and suppress TH2 and TH17 differentiation. It induces the differentiation of TH1 cells via two distinct pathways, p38 MAPK/TBX21- and ICAM1/ITGAL/ERK-dependent pathways. It also induces STAT1, STAT3, STAT4 and STAT5 phosphorylation and activates TBX21/T-Bet via STAT1 with resulting IL12RB2 up-regulation, an event crucial to TH1 cell commitment. It suppresses the expression of GATA3, the inhibitor TH1 cells development. In CD8 T-cells, it activates STATs as well as GZMB. IL-27 reveals to be a potent inhibitor of TH17 cell development and of IL-17 production. Indeed IL27 alone is also able to inhibit the production of IL17 by CD4 and CD8 T-cells. While IL-27 suppressed the development of pro-inflammatory Th17 cells via STAT1, it inhibits the development of anti-inflammatory inducible regulatory T-cells, iTreg, independently of STAT1. IL-27 also has an effect on cytokine production, it suppresses pro-inflammatory cytokine production such as IL2, IL4, IL5 and IL6 and activates suppressors of cytokine signaling such as SOCS1 and SOCS3. Apart from suppression of cytokine production, IL-27 also antagonizes the effects of some cytokines such as IL6 through direct effects on T-cells. Another important role of IL-27 is its antitumor activity as well as its antiangiogenic activity with activation of production of antiangiogenic chemokines such as IP-10/CXCL10 and MIG/CXCL9. In vein endothelial cells, it induces IRF1/interferon regulatory factor 1 and increase the expression of MHC class II transactivator/CIITA with resulting up-regulation of major histocompatibility complex class II. IL-27 also demonstrates antiviral activity with inhibitory properties on HIV-1 replication. This chain is Interleukin-27 subunit alpha (IL27), found in Homo sapiens (Human).